Consider the following 443-residue polypeptide: MLDITLLRKDLASAVAGLEKRKKNQPYLDVSAFTALEAERKTLQTRTEEIQARRNALNKQIGPLKAKGEPVDALMAEVNALKAEQESQSARLDQIQPELQALLLAVPNLPHVSVPVGEDEAGNVEMRRWSPQGGAGANAAPLPFAAKDHVDLGAPLGLDFEMGAKLAGSRFTVMKGPIARLHRALAQFMLDIQTEKHGYAECYVPYIVNAATLSGTGQLPKFEGDLFAAKKGGQEGEPAPDHSALYLIPTSEVPLTNFVRDEVVAEAQLPIKLTAHTPCFRSEAGSAGRDTRGMIRQHQFDKVEMVQIVHPEKSYDALEQMTGHAEAVLQALELPYRVVLLCTGDMGFGATKTYDLEVWLPAQNTYREISSVSNCEAFQARRLQARFKNAQGKNELVHTLNGSGLAVGRTLVAVLENHQNEDGSINVPAALRPYLGGLELLRG.

250 to 252 contributes to the L-serine binding site; the sequence is TSE. Position 281 to 283 (281 to 283) interacts with ATP; the sequence is RSE. Residue glutamate 304 participates in L-serine binding. An ATP-binding site is contributed by 368–371; it reads EISS. Serine 403 is an L-serine binding site.

Belongs to the class-II aminoacyl-tRNA synthetase family. Type-1 seryl-tRNA synthetase subfamily. As to quaternary structure, homodimer. The tRNA molecule binds across the dimer.

It localises to the cytoplasm. It catalyses the reaction tRNA(Ser) + L-serine + ATP = L-seryl-tRNA(Ser) + AMP + diphosphate + H(+). It carries out the reaction tRNA(Sec) + L-serine + ATP = L-seryl-tRNA(Sec) + AMP + diphosphate + H(+). The protein operates within aminoacyl-tRNA biosynthesis; selenocysteinyl-tRNA(Sec) biosynthesis; L-seryl-tRNA(Sec) from L-serine and tRNA(Sec): step 1/1. Catalyzes the attachment of serine to tRNA(Ser). Is also able to aminoacylate tRNA(Sec) with serine, to form the misacylated tRNA L-seryl-tRNA(Sec), which will be further converted into selenocysteinyl-tRNA(Sec). The chain is Serine--tRNA ligase from Variovorax paradoxus (strain S110).